The chain runs to 226 residues: Apoptosis regulator OPG045 (226 aa).

It belongs to the orthopoxvirus OPG045 family. Homodimer. Interacts with host pro-apoptotic protein BCL2L11 (via BH3 domain). Interacts with host NLRP1. Interacts with host BAK.

Its subcellular location is the host mitochondrion outer membrane. The protein localises to the host cytoplasm. In terms of biological role, plays a role in evading host innate immune response by inhibiting host inflammasome activation. Interacts with and inhibits NLR-mediated interleukin-1 beta/IL1B production in infected cells. At the host mitochondria outer membrane, interacts with the BH3 domain of host BAK and prevents BAK from binding active BAX. In turn, host apoptosis is inhibited. The chain is Apoptosis regulator OPG045 (OPG045) from Homo sapiens (Human).